Consider the following 231-residue polypeptide: 5'-methylthioadenosine/S-adenosylhomocysteine nucleosidase (231 aa).

The Proton acceptor role is filled by Glu12. Residues Gly78, Met153, and Met174–Glu175 contribute to the substrate site. Asp198 (proton donor) is an active-site residue.

The protein belongs to the PNP/UDP phosphorylase family. MtnN subfamily.

It carries out the reaction S-adenosyl-L-homocysteine + H2O = S-(5-deoxy-D-ribos-5-yl)-L-homocysteine + adenine. The catalysed reaction is S-methyl-5'-thioadenosine + H2O = 5-(methylsulfanyl)-D-ribose + adenine. The enzyme catalyses 5'-deoxyadenosine + H2O = 5-deoxy-D-ribose + adenine. The protein operates within amino-acid biosynthesis; L-methionine biosynthesis via salvage pathway; S-methyl-5-thio-alpha-D-ribose 1-phosphate from S-methyl-5'-thioadenosine (hydrolase route): step 1/2. Its function is as follows. Catalyzes the irreversible cleavage of the glycosidic bond in both 5'-methylthioadenosine (MTA) and S-adenosylhomocysteine (SAH/AdoHcy) to adenine and the corresponding thioribose, 5'-methylthioribose and S-ribosylhomocysteine, respectively. Also cleaves 5'-deoxyadenosine, a toxic by-product of radical S-adenosylmethionine (SAM) enzymes, into 5-deoxyribose and adenine. The sequence is that of 5'-methylthioadenosine/S-adenosylhomocysteine nucleosidase from Bacillus cytotoxicus (strain DSM 22905 / CIP 110041 / 391-98 / NVH 391-98).